Reading from the N-terminus, the 638-residue chain is Outer dense fiber protein 2 (638 aa).

Thr-73 is subject to Phosphothreonine. Ser-76 is subject to Phosphoserine; by TSSK4. Phosphoserine occurs at positions 87 and 90. Position 91 is a phosphothreonine (Thr-91). Phosphoserine is present on residues Ser-96 and Ser-110. A Glycyl lysine isopeptide (Lys-Gly) (interchain with G-Cter in SUMO2) cross-link involves residue Lys-119. Ser-120 bears the Phosphoserine mark. Residues 125 to 198 are a coiled coil; the sequence is QKGERQMAKR…MSKLVEAEMD (74 aa). Position 212 is a phosphothreonine (Thr-212). 2 coiled-coil regions span residues 226–404 and 442–616; these read DINT…AEQL and EIIV…SDLR. The residue at position 242 (Ser-242) is a Phosphoserine. The disordered stretch occupies residues 373–396; sequence KQKGDRDKESLKKAIRAQKERAEK. The residue at position 613 (Ser-613) is a Phosphoserine.

This sequence belongs to the ODF2 family. In terms of assembly, self-associates. Associates with microtubules and forms a fibrillar structure partially linked to the microtubule network. Interacts via its C-terminus with PLK1. Interacts with ODF1. Localized at the distal/subdistal appendages of mother centrioles. Interacts with MARK4; the interaction is required for localization of ODF2 to centrioles. Interacts with TSSK4. Interacts with AKNA. Interacts with QRICH2. Interacts with CFAP58. Interacts with BBOF1. Interacts with CCDC38. Interacts with CCDC42. In terms of processing, tyrosine phosphorylated. Phosphorylated on Ser-76 by TSSK4.

It is found in the cytoplasm. It localises to the cytoskeleton. Its subcellular location is the microtubule organizing center. The protein resides in the centrosome. The protein localises to the cell projection. It is found in the cilium. It localises to the centriole. Its subcellular location is the spindle pole. The protein resides in the flagellum. Seems to be a major component of sperm tail outer dense fibers (ODF). ODFs are filamentous structures located on the outside of the axoneme in the midpiece and principal piece of the mammalian sperm tail and may help to maintain the passive elastic structures and elastic recoil of the sperm tail. May have a modulating influence on sperm motility. Functions as a general scaffold protein that is specifically localized at the distal/subdistal appendages of mother centrioles. Component of the centrosome matrix required for the localization of PLK1 and NIN to the centrosomes. Required for the formation and/or maintenance of normal CETN1 assembly. The protein is Outer dense fiber protein 2 (ODF2) of Macaca fascicularis (Crab-eating macaque).